The primary structure comprises 629 residues: tRNA uridine 5-carboxymethylaminomethyl modification enzyme MnmG (629 aa).

Residues 13–18, Val125, and Ser180 each bind FAD; that span reads GGGHAG. Position 273–287 (273–287) interacts with NAD(+); sequence GPRYCPSIEDKVMRF. Gln370 serves as a coordination point for FAD.

Belongs to the MnmG family. Homodimer. Heterotetramer of two MnmE and two MnmG subunits. The cofactor is FAD.

Its subcellular location is the cytoplasm. Functionally, NAD-binding protein involved in the addition of a carboxymethylaminomethyl (cmnm) group at the wobble position (U34) of certain tRNAs, forming tRNA-cmnm(5)s(2)U34. This is tRNA uridine 5-carboxymethylaminomethyl modification enzyme MnmG from Psychromonas ingrahamii (strain DSM 17664 / CCUG 51855 / 37).